Reading from the N-terminus, the 254-residue chain is Rho-related protein racD (254 aa).

15–22 contacts GTP; that stretch reads GDGAVGKT. Residues 37–45 carry the Effector region motif; sequence YVPTVFDNF. Residues 62-66 and 120-123 each bind GTP; these read DTAGQ and TKTD. The span at 186–231 shows a compositional bias: low complexity; that stretch reads AVTSPTSKSSGKSSPSSTSSKPSKTTTTTTTSSSSSSPPAASTAKP. Residues 186-254 are disordered; it reads AVTSPTSKSS…KDKDEKKPAK (69 aa). The segment covering 232-254 has biased composition (basic and acidic residues); that stretch reads AGEKKLSWGLFRKKDKDEKKPAK.

The protein belongs to the small GTPase superfamily. Rho family.

In Dictyostelium discoideum (Social amoeba), this protein is Rho-related protein racD (racD).